The chain runs to 784 residues: ATP-dependent 6-phosphofructokinase, platelet type (784 aa).

Met-1 is subject to N-acetylmethionine. Positions 1–399 (MDADDSRAPK…NLNTYKRLAI (399 aa)) are N-terminal catalytic PFK domain 1. 3 positions are modified to phosphoserine: Ser-6, Ser-12, and Ser-21. ATP is bound by residues Gly-34, 97–98 (RC), and 127–130 (GDGS). Asp-128 contacts Mg(2+). Ser-142 bears the Phosphoserine mark. Substrate is bound by residues 173–175 (SID), Arg-210, 217–219 (MGR), Glu-273, Arg-301, and 307–310 (HVQR). Asp-175 functions as the Proton acceptor in the catalytic mechanism. Ser-386 is subject to Phosphoserine. An N6-acetyllysine modification is found at Lys-395. The segment at 400–411 (KLPDDQIPKTNC) is interdomain linker. The segment at 412–784 (NVAVINVGAP…QLEHVQPWSV (373 aa)) is C-terminal regulatory PFK domain 2. Arg-481 contacts beta-D-fructose 2,6-bisphosphate. Lys-486 carries the post-translational modification N6-acetyllysine. Residues 538–542 (TVSNN), Arg-576, 583–585 (MGG), and Glu-639 each bind beta-D-fructose 2,6-bisphosphate. O-linked (GlcNAc) serine glycosylation is present at Ser-540. Residue Tyr-651 is modified to Phosphotyrosine. Residues Arg-665 and 671-674 (HMQQ) each bind beta-D-fructose 2,6-bisphosphate. Position 688 is an N6-acetyllysine (Lys-688). Arg-744 lines the beta-D-fructose 2,6-bisphosphate pocket. Position 783 is a phosphoserine (Ser-783).

It belongs to the phosphofructokinase type A (PFKA) family. ATP-dependent PFK group I subfamily. Eukaryotic two domain clade 'E' sub-subfamily. As to quaternary structure, homo- and heterotetramers. Phosphofructokinase (PFK) enzyme functions as a tetramer composed of different combinations of 3 types of subunits, called PFKM (M), PFKL (L) and PFKP (P). The composition of the PFK tetramer differs according to the tissue type it is present in. The kinetic and regulatory properties of the tetrameric enzyme are dependent on the subunit composition, hence can vary across tissues. Interacts with ATG4B; promoting phosphorylation of ATG4B. The cofactor is Mg(2+). Post-translationally, glcNAcylation decreases enzyme activity. Phosphorylation at Ser-386 promotes interaction with ATG4B.

The protein resides in the cytoplasm. It catalyses the reaction beta-D-fructose 6-phosphate + ATP = beta-D-fructose 1,6-bisphosphate + ADP + H(+). It functions in the pathway carbohydrate degradation; glycolysis; D-glyceraldehyde 3-phosphate and glycerone phosphate from D-glucose: step 3/4. Its activity is regulated as follows. Allosterically activated by ADP, AMP, or fructose 2,6-bisphosphate, and allosterically inhibited by ATP or citrate. Its function is as follows. Catalyzes the phosphorylation of D-fructose 6-phosphate to fructose 1,6-bisphosphate by ATP, the first committing step of glycolysis. This is ATP-dependent 6-phosphofructokinase, platelet type (PFKP) from Pongo abelii (Sumatran orangutan).